A 726-amino-acid polypeptide reads, in one-letter code: MYNSNSYIPDLVEIQRQGFFYLLEKGIIEEISKRNPITCFEKQIEIFFYPQYYRLTKPFYSIQQAIFYKKSYVSKFYIPVQLTDRKTKRIFLKWILLAHFPLMTNRGHFLLNGSARVIINQLVRSPGIYFRENMHEIFSNKWSEKPSTTFRRFYADIICLKGTWLRIECDKDFSMWAKMKKGPKIPLLWFLLGMGLSEKYILNSVYKPMNLLQSFTKEMEKMQKSKSSKELKYPYISSTKQAWEQIQKLFKLKKTLRKFSFLKKNEEKPKTFIFGQSSTKIEAKVVFSDFAAFNNSVKRENTVFASNDDTFLVQTSFETKKKKNTRKKENFQKNKTQKTTKLSLQNKEKRVASKLEAYELGRKWFANKFMNPRTYDLGKQGRWLINKKLGLTIPLEQTTLTALDVLTATDSLMKIEDGFFEIDDIDHLKNKRVRTAGEALQEIFSIGLIRLEKSIRLKLNGNGQQSFFQKTSFFNFDSLMSTRPINGAFREFFGTHPLSQFMDQINPLAEITHKRRLSSLGPGGVSRDTATLAIRGIHPSHYGRICPIETPEGKNTGLVNSITTYSKISFHGYLESPFYKVYKGQVQRNLGVFYLSPDKDDHFQTATPDLNLTPLGFLPKKPIPVRIGKRFVRMKTHKLALMGVSPLQMISVATSFIPFLEHDDANRALMGSNMQRQAVPLIRPERPLIGTGLEARVVSDSGHAILAKTSGYIVYSSGSKIYLYTI.

It belongs to the RNA polymerase beta chain family. As to quaternary structure, in plastids the minimal PEP RNA polymerase catalytic core is composed of four subunits: alpha, beta, beta', and beta''. When a (nuclear-encoded) sigma factor is associated with the core the holoenzyme is formed, which can initiate transcription.

It localises to the plastid. The protein localises to the chloroplast. It carries out the reaction RNA(n) + a ribonucleoside 5'-triphosphate = RNA(n+1) + diphosphate. DNA-dependent RNA polymerase catalyzes the transcription of DNA into RNA using the four ribonucleoside triphosphates as substrates. The protein is DNA-directed RNA polymerase subunit beta N-terminal section (rpoB1) of Tetradesmus obliquus (Green alga).